The chain runs to 261 residues: Chitinase 8 (261 aa).

Residues 1 to 29 form the signal peptide; the sequence is MTTTTTRFVQLAACAAASLLAVAASGAAA. Disulfide bonds link Cys53/Cys115 and Cys221/Cys253. The active-site Proton donor is the Glu98.

Belongs to the glycosyl hydrolase 19 family. Chitinase class II subfamily. Expressed in roots, leaves, sheaths and meristems.

It carries out the reaction Random endo-hydrolysis of N-acetyl-beta-D-glucosaminide (1-&gt;4)-beta-linkages in chitin and chitodextrins.. This Oryza sativa subsp. japonica (Rice) protein is Chitinase 8 (Cht8).